Reading from the N-terminus, the 215-residue chain is Cytochrome b6 (215 aa).

A helical transmembrane segment spans residues 32-52 (IFYCLGGITFTCFLVQVATGF). Position 35 (cysteine 35) interacts with heme c. The heme b site is built by histidine 86 and histidine 100. Helical transmembrane passes span 90–110 (ASMMVLMMILHVFRVWLTGGF), 116–136 (LTWTTGVIMAVCTVSFGVTGY), and 186–206 (LHTFVLPLLTAVFMLMHFLMI). Heme b contacts are provided by histidine 187 and histidine 202.

Belongs to the cytochrome b family. PetB subfamily. In terms of assembly, the 4 large subunits of the cytochrome b6-f complex are cytochrome b6, subunit IV (17 kDa polypeptide, PetD), cytochrome f and the Rieske protein, while the 4 small subunits are PetG, PetL, PetM and PetN. The complex functions as a dimer. Requires heme b as cofactor. It depends on heme c as a cofactor.

Its subcellular location is the plastid. The protein resides in the chloroplast thylakoid membrane. Component of the cytochrome b6-f complex, which mediates electron transfer between photosystem II (PSII) and photosystem I (PSI), cyclic electron flow around PSI, and state transitions. This Stigeoclonium helveticum (Green alga) protein is Cytochrome b6.